The chain runs to 546 residues: Arginine--tRNA ligase (546 aa).

A 'HIGH' region motif is present at residues 122–132 (ANPTGPFTVGH).

Belongs to the class-I aminoacyl-tRNA synthetase family. Monomer.

The protein localises to the cytoplasm. The enzyme catalyses tRNA(Arg) + L-arginine + ATP = L-arginyl-tRNA(Arg) + AMP + diphosphate. This chain is Arginine--tRNA ligase (argS), found in Thermotoga maritima (strain ATCC 43589 / DSM 3109 / JCM 10099 / NBRC 100826 / MSB8).